The following is a 161-amino-acid chain: Cytochrome c-type biogenesis protein CcmE (161 aa).

Residues 1–13 lie on the Cytoplasmic side of the membrane; the sequence is MSWLPKSPKARRR. The chain crosses the membrane as a helical; Signal-anchor for type II membrane protein span at residues 14–34; that stretch reads LMLVAAIAPVLAVAAGLTLWG. The Periplasmic segment spans residues 35 to 161; it reads LSDSISFFYT…QRPEHQGDAL (127 aa). His-128 and Tyr-132 together coordinate heme.

This sequence belongs to the CcmE/CycJ family.

It localises to the cell inner membrane. Functionally, heme chaperone required for the biogenesis of c-type cytochromes. Transiently binds heme delivered by CcmC and transfers the heme to apo-cytochromes in a process facilitated by CcmF and CcmH. This Phenylobacterium zucineum (strain HLK1) protein is Cytochrome c-type biogenesis protein CcmE.